The chain runs to 127 residues: Holo-[acyl-carrier-protein] synthase (127 aa).

Asp9 and Glu58 together coordinate Mg(2+).

The protein belongs to the P-Pant transferase superfamily. AcpS family. Mg(2+) is required as a cofactor.

The protein resides in the cytoplasm. The enzyme catalyses apo-[ACP] + CoA = holo-[ACP] + adenosine 3',5'-bisphosphate + H(+). Its function is as follows. Transfers the 4'-phosphopantetheine moiety from coenzyme A to a Ser of acyl-carrier-protein. The sequence is that of Holo-[acyl-carrier-protein] synthase from Shewanella sp. (strain MR-7).